The chain runs to 482 residues: G-protein coupled receptor 37-like 1 (482 aa).

Positions 1–25 are cleaved as a signal peptide; it reads MRWLWPLGVSLAVALAAGPERAPRG. Disordered stretches follow at residues 25-56 and 78-119; these read GVWLQQGGHQPVAQEQPDRSRRGAEREDAKGL and PTQP…VQNP. Residues 26 to 134 are Extracellular-facing; sequence VWLQQGGHQP…ERSYGAYAVL (109 aa). A compositionally biased stretch (basic and acidic residues) spans 40–54; that stretch reads QPDRSRRGAEREDAK. N-linked (GlcNAc...) asparagine glycosylation occurs at asparagine 105. Residues 135–155 traverse the membrane as a helical segment; the sequence is LLALLLFAVGIVGSLAVMCIV. Over 156–167 the chain is Cytoplasmic; sequence WHSYYLKSAWNS. Residues 168–188 traverse the membrane as a helical segment; it reads VLASLALWDFLVLFFCLPVVT. Residues 189 to 205 lie on the Extracellular side of the membrane; the sequence is FHEITKQRLLGAVSCRA. Cysteines 203 and 286 form a disulfide. Residues 206-226 traverse the membrane as a helical segment; it reads VPFVEVSSLGVTTFSLCALGI. Over 227–251 the chain is Cytoplasmic; sequence DRFHVATSTLPKARPIEPCPSILAK. Residues 252-272 form a helical membrane-spanning segment; sequence LAVIWVGSMTLAAPELLLWQL. At 273–310 the chain is on the extracellular side; sequence VREPSPAAGTVDTCIMKPSAHLPESLYSLVLTYQNARM. A helical membrane pass occupies residues 311–331; that stretch reads WWSFGCYFCLPVLFTVTCQLV. The Cytoplasmic segment spans residues 332–361; sequence TWRVRGTPGRKPESRPGPQEPRGARPSSTV. The disordered stretch occupies residues 338 to 358; that stretch reads TPGRKPESRPGPQEPRGARPS. A helical membrane pass occupies residues 362–382; that stretch reads AGLAAVHALCALPENVCNVVA. The Extracellular portion of the chain corresponds to 383 to 398; it reads AYLSAALTRQTLELLG. The helical transmembrane segment at 399 to 419 threads the bilayer; that stretch reads LVTQFSTFFKAALTPLLLLCV. Topologically, residues 420–482 are cytoplasmic; sequence SRPLGRAFLD…PPLLALGTPC (63 aa). Threonine 480 carries the phosphothreonine modification.

This sequence belongs to the G-protein coupled receptor 1 family. In terms of assembly, interacts with the PTCH1 receptor. In terms of processing, undergoes metalloprotease-mediated cleavage which reduces its constitutive activity. Ubiquitinated.

The protein localises to the cell membrane. Its subcellular location is the cell projection. It is found in the cilium membrane. Its function is as follows. G-protein coupled receptor. Has been shown to bind the neuroprotective and glioprotective factor prosaposin (PSAP), leading to endocytosis followed by an ERK phosphorylation cascade. However, other studies have shown that prosaposin does not increase activity. It has been suggested that GPR37L1 is a constitutively active receptor which signals through the guanine nucleotide-binding protein G(s) subunit alpha. Participates in the regulation of postnatal cerebellar development by modulating the Shh pathway. Regulates baseline blood pressure in females and protects against cardiovascular stress in males. Mediates inhibition of astrocyte glutamate transporters and reduction in neuronal N-methyl-D-aspartate receptor activity. This chain is G-protein coupled receptor 37-like 1 (GPR37L1), found in Bos taurus (Bovine).